Here is a 964-residue protein sequence, read N- to C-terminus: Glycine dehydrogenase (decarboxylating) (964 aa).

Residues 1-11 are compositionally biased toward polar residues; sequence MNSTLQNQTKT. The segment at 1–21 is disordered; sequence MNSTLQNQTKTNLEKVGTDPL. At lysine 713 the chain carries N6-(pyridoxal phosphate)lysine.

This sequence belongs to the GcvP family. The glycine cleavage system is composed of four proteins: P, T, L and H. It depends on pyridoxal 5'-phosphate as a cofactor.

It carries out the reaction N(6)-[(R)-lipoyl]-L-lysyl-[glycine-cleavage complex H protein] + glycine + H(+) = N(6)-[(R)-S(8)-aminomethyldihydrolipoyl]-L-lysyl-[glycine-cleavage complex H protein] + CO2. Its function is as follows. The glycine cleavage system catalyzes the degradation of glycine. The P protein binds the alpha-amino group of glycine through its pyridoxal phosphate cofactor; CO(2) is released and the remaining methylamine moiety is then transferred to the lipoamide cofactor of the H protein. The polypeptide is Glycine dehydrogenase (decarboxylating) (Leptospira interrogans serogroup Icterohaemorrhagiae serovar copenhageni (strain Fiocruz L1-130)).